The primary structure comprises 75 residues: Putative membrane protein insertion efficiency factor 2 (75 aa).

It belongs to the UPF0161 family.

It localises to the cell membrane. Could be involved in insertion of integral membrane proteins into the membrane. The chain is Putative membrane protein insertion efficiency factor 2 from Bacillus licheniformis (strain ATCC 14580 / DSM 13 / JCM 2505 / CCUG 7422 / NBRC 12200 / NCIMB 9375 / NCTC 10341 / NRRL NRS-1264 / Gibson 46).